The following is a 115-amino-acid chain: U3-lycotoxin-Ls1a (115 aa).

An N-terminal signal peptide occupies residues 1–20 (MKFVLLFGVLLVTLFSYSSA). A propeptide spanning residues 21-44 (EMLDDFDQADEDELLSLIEKEEAR) is cleaved from the precursor. 4 cysteine pairs are disulfide-bonded: Cys48/Cys63, Cys55/Cys72, Cys62/Cys87, and Cys74/Cys85.

This sequence belongs to the neurotoxin 19 (CSTX) family. 01 subfamily. In terms of tissue distribution, expressed by the venom gland.

It localises to the secreted. This chain is U3-lycotoxin-Ls1a, found in Lycosa singoriensis (Wolf spider).